Reading from the N-terminus, the 243-residue chain is Protein IN2-1 (243 aa).

Residues 1-26 are disordered; that stretch reads MAAAAGPSSSVKESLPPALGSTSQPP. The 82-residue stretch at 31 to 112 folds into the GST N-terminal domain; it reads GTTRLYICYF…YIDSNFDGPA (82 aa). Glutathione is bound by residues K70, V84, and 96-97; that span reads ES. Residues 109–240 enclose the GST C-terminal domain; it reads DGPALLPEDA…FLLDLAKSHL (132 aa).

Belongs to the GST superfamily. HSP26 family. Leaves and roots. It is more strongly induced in the leaves relative to the roots.

The sequence is that of Protein IN2-1 (IN2-1) from Zea mays (Maize).